Consider the following 598-residue polypeptide: Aluminum-activated malate transporter 9 (598 aa).

The next 6 helical transmembrane spans lie at 88-108 (IVFS…IFYQ), 117-137 (YSVW…GATL), 144-164 (ALGT…STLF), 170-190 (IFCT…KLYP), 194-214 (AYEY…ISGF), and 227-247 (FLLI…IYPI).

It belongs to the aromatic acid exporter (TC 2.A.85) family. Expressed in hypocotyls, leaves, roots, flowers, sepals and stamina. In leaves, expressed almost exclusively in mesophyll cells.

The protein localises to the vacuole membrane. Slow activation by external aluminum. Its function is as follows. Vacuolar malate channel. Has a higher selectivity for malate than for fumarate. Also exhibits a weak chloride conductance. This Arabidopsis thaliana (Mouse-ear cress) protein is Aluminum-activated malate transporter 9 (ALMT9).